The following is a 548-amino-acid chain: Chaperonin GroEL (548 aa).

ATP is bound by residues 30 to 33 (TLGP), Lys-51, 87 to 91 (DGTTT), Gly-415, 479 to 481 (NAA), and Asp-495.

The protein belongs to the chaperonin (HSP60) family. In terms of assembly, forms a cylinder of 14 subunits composed of two heptameric rings stacked back-to-back. Interacts with the co-chaperonin GroES. Post-translationally, UMPylated on a tyrosine residue by YdiU under ATP-limited conditions.

Its subcellular location is the cytoplasm. The catalysed reaction is ATP + H2O + a folded polypeptide = ADP + phosphate + an unfolded polypeptide.. With respect to regulation, UMPylation of the chaperone by YdiU negatively regulates its activity, facilitating Salmonella survival under ATP-limited conditions. Functionally, together with its co-chaperonin GroES, plays an essential role in assisting protein folding. The GroEL-GroES system forms a nano-cage that allows encapsulation of the non-native substrate proteins and provides a physical environment optimized to promote and accelerate protein folding. The sequence is that of Chaperonin GroEL from Salmonella typhimurium (strain LT2 / SGSC1412 / ATCC 700720).